The following is a 721-amino-acid chain: Peptide-N(4)-(N-acetyl-beta-glucosaminyl)asparagine amidase (721 aa).

Residues C193, C196, C225, and C228 each contribute to the Zn(2+) site. C251 (nucleophile) is an active-site residue. Active-site residues include H278 and D295.

The protein belongs to the transglutaminase-like superfamily. PNGase family. Requires Zn(2+) as cofactor.

Its subcellular location is the cytoplasm. The catalysed reaction is Hydrolysis of an N(4)-(acetyl-beta-D-glucosaminyl)asparagine residue in which the glucosamine residue may be further glycosylated, to yield a (substituted) N-acetyl-beta-D-glucosaminylamine and a peptide containing an aspartate residue.. Functionally, specifically deglycosylates the denatured form of N-linked glycoproteins in the cytoplasm and assists their proteasome-mediated degradation. Cleaves the beta-aspartyl-glucosamine (GlcNAc) of the glycan and the amide side chain of Asn, converting Asn to Asp. Prefers proteins containing high-mannose over those bearing complex type oligosaccharides. Can recognize misfolded proteins in the endoplasmic reticulum that are exported to the cytosol to be destroyed and deglycosylate them, while it has no activity toward native proteins. Deglycosylation is a prerequisite for subsequent proteasome-mediated degradation of some, but not all, misfolded glycoproteins. In Arabidopsis thaliana (Mouse-ear cress), this protein is Peptide-N(4)-(N-acetyl-beta-glucosaminyl)asparagine amidase (PNG1).